Here is an 84-residue protein sequence, read N- to C-terminus: Small ribosomal subunit protein uS17 (84 aa).

The protein belongs to the universal ribosomal protein uS17 family. Part of the 30S ribosomal subunit.

Functionally, one of the primary rRNA binding proteins, it binds specifically to the 5'-end of 16S ribosomal RNA. The sequence is that of Small ribosomal subunit protein uS17 from Hamiltonella defensa subsp. Acyrthosiphon pisum (strain 5AT).